A 1345-amino-acid chain; its full sequence is DNA-directed RNA polymerase subunit beta' (1345 aa).

The Zn(2+) site is built by Cys60, Cys62, Cys75, and Cys78. Residues Asp536, Asp538, and Asp540 each coordinate Mg(2+). Zn(2+) contacts are provided by Cys895, Cys974, Cys981, and Cys984.

It belongs to the RNA polymerase beta' chain family. In terms of assembly, the RNAP catalytic core consists of 2 alpha, 1 beta, 1 beta' and 1 omega subunit. When a sigma factor is associated with the core the holoenzyme is formed, which can initiate transcription. Requires Mg(2+) as cofactor. Zn(2+) serves as cofactor.

The enzyme catalyses RNA(n) + a ribonucleoside 5'-triphosphate = RNA(n+1) + diphosphate. Its function is as follows. DNA-dependent RNA polymerase catalyzes the transcription of DNA into RNA using the four ribonucleoside triphosphates as substrates. This is DNA-directed RNA polymerase subunit beta' from Bifidobacterium longum (strain DJO10A).